We begin with the raw amino-acid sequence, 894 residues long: Pentatricopeptide repeat-containing protein At1g19720 (894 aa).

PPR repeat units lie at residues 80-110 (KRST…FGLF), 114-144 (DVFV…MRER), 145-179 (NLFT…GVLP), 180-214 (DDFL…GMSS), 215-245 (CLRV…MRER), 246-280 (DVIA…GISP), 281-315 (GLVT…GITA), 316-350 (DVFT…GVVP), 351-385 (NAVT…GFID), 386-416 (DVLV…VKNK), 417-451 (DVYT…NLRP), 452-486 (NIIT…GKVQ), 488-522 (NTAT…RFMP), 523-557 (NSVT…NLDA), 558-588 (IHAV…METK), 589-623 (DIIT…GITP), 624-659 (NRGT…HIIP), and 660-694 (ALEH…SETP). A type E motif region spans residues 695–770 (IWESFLTGCR…PLGQSWIEVR (76 aa)). The interval 771-801 (NLIHTFTTGDQSKLCTDVLYPLVEKMSRLDN) is type E(+) motif. Residues 803–894 (SDQYNGELWI…NGDCSCKDYW (92 aa)) form a type DYW motif region.

This sequence belongs to the PPR family. PCMP-H subfamily.

This Arabidopsis thaliana (Mouse-ear cress) protein is Pentatricopeptide repeat-containing protein At1g19720 (DYW7).